Reading from the N-terminus, the 450-residue chain is Putative zinc metalloprotease TP_0600 (450 aa).

His-18 contacts Zn(2+). Glu-19 is an active-site residue. His-22 is a Zn(2+) binding site. The chain crosses the membrane as a helical span at residues 102–124 (IAFAGPLANVLMAVMVLALVSAL). The PDZ domain maps to 200–278 (TITPDRDAHT…SVVLTVLRSG (79 aa)). 2 consecutive transmembrane segments (helical) span residues 384–406 (VCVS…LILF) and 421–443 (VLYY…AFWN).

The protein belongs to the peptidase M50B family. It depends on Zn(2+) as a cofactor.

It localises to the cell inner membrane. In Treponema pallidum (strain Nichols), this protein is Putative zinc metalloprotease TP_0600.